Reading from the N-terminus, the 89-residue chain is Small ribosomal subunit protein bS18 (89 aa).

The protein belongs to the bacterial ribosomal protein bS18 family. In terms of assembly, part of the 30S ribosomal subunit. Forms a tight heterodimer with protein bS6.

In terms of biological role, binds as a heterodimer with protein bS6 to the central domain of the 16S rRNA, where it helps stabilize the platform of the 30S subunit. This is Small ribosomal subunit protein bS18 from Bdellovibrio bacteriovorus (strain ATCC 15356 / DSM 50701 / NCIMB 9529 / HD100).